Reading from the N-terminus, the 425-residue chain is Riboflavin biosynthesis protein RibBA (425 aa).

The tract at residues 1–204 (MTRLDSVERA…IADLIEWRRK (204 aa)) is DHBP synthase. D-ribulose 5-phosphate contacts are provided by residues 28–29 (RE), aspartate 33, 141–145 (RPGHT), and glutamate 165. Glutamate 29 is a Mg(2+) binding site. A Mg(2+)-binding site is contributed by histidine 144. The segment at 205-425 (HEKHIERVAE…HLPGEFGGAL (221 aa)) is GTP cyclohydrolase II. 259 to 263 (RVHSE) is a binding site for GTP. 3 residues coordinate Zn(2+): cysteine 264, cysteine 275, and cysteine 277. GTP contacts are provided by residues glutamine 280, 303 to 305 (EGR), and threonine 325. Aspartate 337 functions as the Proton acceptor; for GTP cyclohydrolase activity in the catalytic mechanism. Arginine 339 serves as the catalytic Nucleophile; for GTP cyclohydrolase activity. 2 residues coordinate GTP: threonine 360 and lysine 365.

This sequence in the N-terminal section; belongs to the DHBP synthase family. The protein in the C-terminal section; belongs to the GTP cyclohydrolase II family. Mg(2+) serves as cofactor. Mn(2+) is required as a cofactor. It depends on Zn(2+) as a cofactor.

It catalyses the reaction D-ribulose 5-phosphate = (2S)-2-hydroxy-3-oxobutyl phosphate + formate + H(+). It carries out the reaction GTP + 4 H2O = 2,5-diamino-6-hydroxy-4-(5-phosphoribosylamino)-pyrimidine + formate + 2 phosphate + 3 H(+). Its pathway is cofactor biosynthesis; riboflavin biosynthesis; 2-hydroxy-3-oxobutyl phosphate from D-ribulose 5-phosphate: step 1/1. The protein operates within cofactor biosynthesis; riboflavin biosynthesis; 5-amino-6-(D-ribitylamino)uracil from GTP: step 1/4. Its function is as follows. Catalyzes the conversion of D-ribulose 5-phosphate to formate and 3,4-dihydroxy-2-butanone 4-phosphate. Functionally, catalyzes the conversion of GTP to 2,5-diamino-6-ribosylamino-4(3H)-pyrimidinone 5'-phosphate (DARP), formate and pyrophosphate. The chain is Riboflavin biosynthesis protein RibBA from Mycobacterium ulcerans (strain Agy99).